A 458-amino-acid chain; its full sequence is UDP-N-acetylmuramoylalanine--D-glutamate ligase (458 aa).

Position 124-130 (124-130 (GSDGKTT)) interacts with ATP.

This sequence belongs to the MurCDEF family.

It is found in the cytoplasm. It carries out the reaction UDP-N-acetyl-alpha-D-muramoyl-L-alanine + D-glutamate + ATP = UDP-N-acetyl-alpha-D-muramoyl-L-alanyl-D-glutamate + ADP + phosphate + H(+). Its pathway is cell wall biogenesis; peptidoglycan biosynthesis. In terms of biological role, cell wall formation. Catalyzes the addition of glutamate to the nucleotide precursor UDP-N-acetylmuramoyl-L-alanine (UMA). The chain is UDP-N-acetylmuramoylalanine--D-glutamate ligase from Clostridium perfringens (strain 13 / Type A).